The chain runs to 155 residues: Transcriptional repressor NrdR (155 aa).

Residues 3 to 34 fold into a zinc finger; sequence CPFCGNVDTQVKDSRPAEDHVSIRRRRFCPAC. One can recognise an ATP-cone domain in the interval 49–139; that stretch reads LVVIKTNGKR…VYKNFQAADD (91 aa).

The protein belongs to the NrdR family. The cofactor is Zn(2+).

Negatively regulates transcription of bacterial ribonucleotide reductase nrd genes and operons by binding to NrdR-boxes. In Ruegeria sp. (strain TM1040) (Silicibacter sp.), this protein is Transcriptional repressor NrdR.